Here is a 185-residue protein sequence, read N- to C-terminus: Ribosome-recycling factor (185 aa).

A disordered region spans residues A138–G185.

The protein belongs to the RRF family.

Its subcellular location is the cytoplasm. Functionally, responsible for the release of ribosomes from messenger RNA at the termination of protein biosynthesis. May increase the efficiency of translation by recycling ribosomes from one round of translation to another. The polypeptide is Ribosome-recycling factor (Lactobacillus delbrueckii subsp. bulgaricus (strain ATCC BAA-365 / Lb-18)).